Consider the following 690-residue polypeptide: Protein arginine N-methyltransferase 7 (690 aa).

2 SAM-dependent MTase PRMT-type domains span residues 14–357 (QNSW…YSLW) and 366–690 (TKSV…QKKL).

It belongs to the class I-like SAM-binding methyltransferase superfamily. Protein arginine N-methyltransferase family. PRMT7 subfamily.

In terms of biological role, essential arginine methyltransferase that can both catalyze the formation of omega-N monomethylarginine (MMA) and symmetrical dimethylarginine (sDMA). Specifically mediates the symmetrical dimethylation of arginine residues in the small nuclear ribonucleoproteins SmD1 and SmD3. The chain is Protein arginine N-methyltransferase 7 (Art7) from Drosophila sechellia (Fruit fly).